The following is a 571-amino-acid chain: uncharacterized protein (571 aa).

Residues 1–25 (MAPSVATSLKAEILPSPRTSSPSSN) form a disordered region. The FAD-binding FR-type domain maps to 135-389 (FSVFPAPILD…RGLHKNAFAT (255 aa)). The segment at 447–479 (NPLQKSSDDDASSTVSQQTETEMDSFEVKKDGT) is disordered.

It belongs to the flavoprotein pyridine nucleotide cytochrome reductase family. FAD is required as a cofactor.

This is an uncharacterized protein from Schizosaccharomyces pombe (strain 972 / ATCC 24843) (Fission yeast).